The chain runs to 382 residues: Alpha-2B adrenergic receptor (382 aa).

Residues 1–25 (AIAAVITFLILFTIFGNALVILAVL) traverse the membrane as a helical segment. Topologically, residues 26-36 (TSRSLRAPQNL) are cytoplasmic. A helical transmembrane segment spans residues 37–62 (FLVSLAAADILVATLIIPFSLANELL). Topologically, residues 63–72 (GYWYFRHTWC) are extracellular. A disulfide bridge connects residues Cys72 and Cys151. Residues 73–95 (EVYLALDVLFCTSSIVHLCAISL) form a helical membrane-spanning segment. Topologically, residues 96–117 (DRYWSVSRALEYNSKRTPRRIK) are cytoplasmic. A helical transmembrane segment spans residues 118–140 (GIILTVWLIAAFISLPPLIYKGD). Residues 141 to 156 (KGKKPGGRPQCKLNEE) lie on the Extracellular side of the membrane. The chain crosses the membrane as a helical span at residues 157 to 180 (AWYILSSSIGSFFAPCLIMILVYL). The Cytoplasmic segment spans residues 181 to 346 (RIYLIAKRRN…MNREKRFTFV (166 aa)). The disordered stretch occupies residues 192-305 (QGPHGKQAPG…QGTPNFQPSQ (114 aa)). Residues 271–284 (EEEEEEEEEEEEEC) show a composition bias toward acidic residues. Over residues 291 to 305 (TSSSLQGTPNFQPSQ) the composition is skewed to polar residues. A helical transmembrane segment spans residues 347–370 (LAVVIGVFVLCWFPFFFSYSLGAI). Topologically, residues 371-379 (CPQHCKVPH) are extracellular. Residues 380 to 382 (GLF) form a helical membrane-spanning segment.

The protein belongs to the G-protein coupled receptor 1 family. Adrenergic receptor subfamily. ADRA2B sub-subfamily. In terms of assembly, interacts with RAB26. Interacts with PPP1R9B. Interacts with GGA1, GGA2 and GGA3.

It localises to the cell membrane. Its function is as follows. Alpha-2 adrenergic receptors mediate the catecholamine-induced inhibition of adenylate cyclase through the action of G proteins. The protein is Alpha-2B adrenergic receptor (ADRA2B) of Didelphis virginiana (North American opossum).